The chain runs to 487 residues: 3-octaprenyl-4-hydroxybenzoate carboxy-lyase (487 aa).

Residue asparagine 172 participates in Mn(2+) binding. Prenylated FMN is bound by residues 175–177 (IYR), 189–191 (RWL), and 194–195 (RG). A Mn(2+)-binding site is contributed by glutamate 238. Aspartate 287 (proton donor) is an active-site residue.

The protein belongs to the UbiD family. As to quaternary structure, homohexamer. Prenylated FMN is required as a cofactor. It depends on Mn(2+) as a cofactor.

It localises to the cell membrane. It catalyses the reaction a 4-hydroxy-3-(all-trans-polyprenyl)benzoate + H(+) = a 2-(all-trans-polyprenyl)phenol + CO2. Its pathway is cofactor biosynthesis; ubiquinone biosynthesis. Its function is as follows. Catalyzes the decarboxylation of 3-octaprenyl-4-hydroxy benzoate to 2-octaprenylphenol, an intermediate step in ubiquinone biosynthesis. The protein is 3-octaprenyl-4-hydroxybenzoate carboxy-lyase of Nitrosomonas europaea (strain ATCC 19718 / CIP 103999 / KCTC 2705 / NBRC 14298).